The chain runs to 300 residues: Elongator complex protein 5 (300 aa).

Ser-252 is subject to Phosphoserine. Residues 264-300 are disordered; the sequence is QQALLRPRPGQATSHIFYEPDAYDDLDQEDPDDDLDI. A compositionally biased stretch (acidic residues) spans 284–300; sequence DAYDDLDQEDPDDDLDI.

The protein belongs to the ELP5 family. In terms of assembly, component of the elongator complex which consists of ELP1, ELP2, ELP3, ELP4, ELP5 and ELP6; in the complex, is required for optimal binding of ELP3 to ELP4. Tyrosine-phosphorylated. As to expression, ubiquitously expressed with high levels in heart, brain, liver, skeletal muscle and testis.

Its subcellular location is the nucleus. The protein resides in the cytoplasm. The protein operates within tRNA modification; 5-methoxycarbonylmethyl-2-thiouridine-tRNA biosynthesis. Its function is as follows. Component of the elongator complex which is required for multiple tRNA modifications, including mcm5U (5-methoxycarbonylmethyl uridine), mcm5s2U (5-methoxycarbonylmethyl-2-thiouridine), and ncm5U (5-carbamoylmethyl uridine). The elongator complex catalyzes formation of carboxymethyluridine in the wobble base at position 34 in tRNAs. Involved in cell migration. In Homo sapiens (Human), this protein is Elongator complex protein 5.